The sequence spans 149 residues: NPC intracellular cholesterol transporter 2 (149 aa).

Positions Met1–Ala19 are cleaved as a signal peptide. Intrachain disulfides connect Cys27–Cys140, Cys42–Cys47, and Cys93–Cys99. Asn58 is a glycosylation site (N-linked (GlcNAc...) asparagine). N6-acetyllysine is present on Lys116.

Belongs to the NPC2 family. Interacts with NPC1 (via the second lumenal domain) in a cholestrol-dependent manner. Interacts with NUS1/NgBR, the interaction stabilizes NCP2 and regulates cholesterol trafficking. Interacts with DHDDS. Interacts with NEDD4L (via C2 domain). Interacts with NPC1L1. Expressed in kidney, spleen, liver and mammary gland, but not in testis.

It is found in the secreted. Its subcellular location is the endoplasmic reticulum. The protein localises to the lysosome. It catalyses the reaction cholesterol(in) = cholesterol(out). Functionally, intracellular cholesterol transporter which acts in concert with NPC1 and plays an important role in the egress of cholesterol from the lysosomal compartment. Unesterified cholesterol that has been released from LDLs in the lumen of the late endosomes/lysosomes is transferred by NPC2 to the cholesterol-binding pocket in the N-terminal domain of NPC1. May bind and mobilize cholesterol that is associated with membranes. NPC2 binds cholesterol with a 1:1 stoichiometry. Can bind a variety of sterols, including lathosterol, desmosterol and the plant sterols stigmasterol and beta-sitosterol. The secreted form of NCP2 regulates biliary cholesterol secretion via stimulation of ABCG5/ABCG8-mediated cholesterol transport. The polypeptide is NPC intracellular cholesterol transporter 2 (Bos taurus (Bovine)).